The following is a 272-amino-acid chain: Hemin import ATP-binding protein HmuV (272 aa).

Positions 2-255 (LNAEHLHVAR…DLIERCYGFR (254 aa)) constitute an ABC transporter domain. Residue 34–41 (GRNGAGKS) participates in ATP binding.

Belongs to the ABC transporter superfamily. Heme (hemin) importer (TC 3.A.1.14.5) family. The complex is composed of two ATP-binding proteins (HmuV), two transmembrane proteins (HmuU) and a solute-binding protein (HmuT).

It is found in the cell inner membrane. In terms of biological role, part of the ABC transporter complex HmuTUV involved in hemin import. Responsible for energy coupling to the transport system. This is Hemin import ATP-binding protein HmuV from Burkholderia thailandensis (strain ATCC 700388 / DSM 13276 / CCUG 48851 / CIP 106301 / E264).